The sequence spans 609 residues: UvrABC system protein C (609 aa).

The GIY-YIG domain maps to 19 to 97 (ASPGCYLWKS…IKKHNPRFNV (79 aa)). The region spanning 208 to 243 (ESLVSDLNIKMSNASERLDFEKAARYRDMLQRIQNF) is the UVR domain.

Belongs to the UvrC family. Interacts with UvrB in an incision complex.

It localises to the cytoplasm. The UvrABC repair system catalyzes the recognition and processing of DNA lesions. UvrC both incises the 5' and 3' sides of the lesion. The N-terminal half is responsible for the 3' incision and the C-terminal half is responsible for the 5' incision. The sequence is that of UvrABC system protein C from Leptospira interrogans serogroup Icterohaemorrhagiae serovar Lai (strain 56601).